The primary structure comprises 452 residues: MLNGSASKPATARKSAGLTGSVRIPGDKSISHRSFMIGGLASGETRITGLLEGEDVINTGRAMQAMGARIRKEGAQWVIEGTGNGALLAPDAPLDFGNAGTGVRLTMGLVGTYDFHSTFIGDASLSKRPMGRVLNPLREMGVQVSASEGDRLPVTLRGPGTPSPIRYRVPMASAQVKSAVLLAGLNTPGVTTVIEPVMTRDHTEKMLQGFGAALSVETDGDGVRTIRLEGRGKLAGQVIDVPGDPSSTAFPLVAALIVPGSDITIVNVLMNPTRTGLILTLQEMGADIEVVNARLAGGEDVADLRVRHSELKGVTVPEDRAPSMIDEYPILAVAACFAEGATVMKGLEELRVKESDRLSAVADGLKLNGVDCDEGEDFLIVRGRPDGKGLGNAADGRVSTHLDHRIAMSFLVLGLASEHAVTIDDAAMIATSFPEFMQLMTGLGAKIELVAE.

Residues 1-23 form a disordered region; the sequence is MLNGSASKPATARKSAGLTGSVR. 3-phosphoshikimate-binding residues include Lys28, Ser29, and Arg33. Lys28 provides a ligand contact to phosphoenolpyruvate. Gly100 and Arg128 together coordinate phosphoenolpyruvate. The 3-phosphoshikimate site is built by Ser173, Gln175, Asp326, and Lys353. A phosphoenolpyruvate-binding site is contributed by Gln175. The Proton acceptor role is filled by Asp326. 2 residues coordinate phosphoenolpyruvate: Arg357 and Arg405.

This sequence belongs to the EPSP synthase family. As to quaternary structure, monomer.

It localises to the cytoplasm. The enzyme catalyses 3-phosphoshikimate + phosphoenolpyruvate = 5-O-(1-carboxyvinyl)-3-phosphoshikimate + phosphate. Its pathway is metabolic intermediate biosynthesis; chorismate biosynthesis; chorismate from D-erythrose 4-phosphate and phosphoenolpyruvate: step 6/7. Functionally, catalyzes the transfer of the enolpyruvyl moiety of phosphoenolpyruvate (PEP) to the 5-hydroxyl of shikimate-3-phosphate (S3P) to produce enolpyruvyl shikimate-3-phosphate and inorganic phosphate. The sequence is that of 3-phosphoshikimate 1-carboxyvinyltransferase from Rhizobium johnstonii (strain DSM 114642 / LMG 32736 / 3841) (Rhizobium leguminosarum bv. viciae).